The following is a 204-amino-acid chain: MGDMYDESFDKSGGPADLMDDSWVESVSWKDLLKKLHSIKFALQSGRDEITGLLAALNRQCPYSPYEQFPDKKVYFLLDSRANSALGVIQNASAFKRRADEKNAVAGVTNIPANPNTTVTTNQGSTTTTKANTGSTLEEDLYTYYKFDDASTAFHKSLTSLENMELKSYYRRNFEKVFGIKFGGAAASSSAPPPASGGPIRPNP.

Disordered stretches follow at residues 112–132 (PANPNTTVTTNQGSTTTTKAN) and 185–204 (AAASSSAPPPASGGPIRPNP). Residues 117–132 (TTVTTNQGSTTTTKAN) are compositionally biased toward low complexity. A compositionally biased stretch (pro residues) spans 191–204 (APPPASGGPIRPNP).

This sequence belongs to the virgaviridae capsid protein family. As to quaternary structure, interacts with the 40 kDa protein; this interaction may play a role in vector transmission of the virus.

It localises to the virion. Capsid protein self-assembles to form rod-shaped virions about 22 nm in diameter with a central canal enclosing the viral genomic RNA. In Bidens pilosa (Hairy beggarticks), this protein is Capsid protein (CP).